Here is a 77-residue protein sequence, read N- to C-terminus: MASLMQVRDCVALNGRADARLVSHQLNMPEPMVKAMLERLTLMGKLEEVDVEECLVGSCKSCPEATACQTKVYQLRS.

Positions 54, 59, 62, and 68 each coordinate iron-sulfur cluster.

The protein belongs to the FeoC family.

Its function is as follows. May function as a transcriptional regulator that controls feoABC expression. The polypeptide is Probable [Fe-S]-dependent transcriptional repressor (Proteus mirabilis (strain HI4320)).